A 262-amino-acid polypeptide reads, in one-letter code: Snake venom serine proteinase 9 (262 aa).

A signal peptide spans 1–18 (MVLIRVLANLLILQLSYA). The propeptide occupies 19-24 (QKSSEL). Residues 25–253 (VIGGDECNID…HLDWIQSIIA (229 aa)) enclose the Peptidase S1 domain. Disulfide bonds link cysteine 31–cysteine 165, cysteine 52–cysteine 68, cysteine 144–cysteine 214, cysteine 176–cysteine 193, and cysteine 204–cysteine 229. Histidine 67 (charge relay system) is an active-site residue. N-linked (GlcNAc...) asparagine glycosylation is present at asparagine 105. The active-site Charge relay system is the aspartate 112. The active-site Charge relay system is the serine 208.

It belongs to the peptidase S1 family. Snake venom subfamily. In terms of assembly, monomer. As to expression, expressed by the venom gland.

It is found in the secreted. Its function is as follows. Snake venom serine protease that may act in the hemostasis system of the prey. This is Snake venom serine proteinase 9 from Crotalus adamanteus (Eastern diamondback rattlesnake).